The following is a 453-amino-acid chain: Protein IVY1 (453 aa).

Polar residues predominate over residues Met1–Asp16. The tract at residues Met1 to Arg20 is disordered. Ser59, Ser84, and Ser85 each carry phosphoserine. Coiled-coil stretches lie at residues Lys102–Tyr122 and Ile230–Phe257. Disordered stretches follow at residues Asp316–Gly340 and Thr353–Ile453. Ser335 bears the Phosphoserine mark. Residues Thr353–Thr371 show a composition bias toward low complexity. 2 stretches are compositionally biased toward polar residues: residues Val372–Lys384 and Leu404–Gln429. Positions Ser431 to Asp442 are enriched in basic and acidic residues. The span at Thr443–Ile453 shows a compositional bias: polar residues.

Homomultimer. Interacts with YPT7 and VPS33.

The protein localises to the vacuole membrane. Its function is as follows. May be required for vacuolar fusion. Overexpression leads to fragmentation of vacuoles, missorting of the vacuolar enzyme carboxypeptidase Y (CPY) to the exterior of the cell and accumulation of multivesicular bodies inside the cell. The chain is Protein IVY1 (IVY1) from Saccharomyces cerevisiae (strain ATCC 204508 / S288c) (Baker's yeast).